We begin with the raw amino-acid sequence, 177 residues long: Adenine phosphoribosyltransferase (177 aa).

Belongs to the purine/pyrimidine phosphoribosyltransferase family. In terms of assembly, homodimer.

It localises to the cytoplasm. The catalysed reaction is AMP + diphosphate = 5-phospho-alpha-D-ribose 1-diphosphate + adenine. Its pathway is purine metabolism; AMP biosynthesis via salvage pathway; AMP from adenine: step 1/1. In terms of biological role, catalyzes a salvage reaction resulting in the formation of AMP, that is energically less costly than de novo synthesis. The polypeptide is Adenine phosphoribosyltransferase (Synechococcus sp. (strain RCC307)).